Consider the following 190-residue polypeptide: Vascular endothelial growth factor A (190 aa).

The first 26 residues, 1 to 26 (MNFLLSWVHWTLALLLYLHHAKWSQA), serve as a signal peptide directing secretion. 3 cysteine pairs are disulfide-bonded: Cys-51–Cys-93, Cys-82–Cys-127, and Cys-86–Cys-129. Residue Asn-100 is glycosylated (N-linked (GlcNAc...) asparagine).

This sequence belongs to the PDGF/VEGF growth factor family. As to quaternary structure, homodimer; disulfide-linked. Also found as heterodimer with PGF. Interacts with NRP1. Interacts with isoform 2 of BSG. Interacts with CD82; this interaction inhibits VEGFA-mediated signaling pathway.

Its subcellular location is the secreted. Functionally, growth factor active in angiogenesis, vasculogenesis and endothelial cell growth. Induces endothelial cell proliferation, promotes cell migration, inhibits apoptosis and induces permeabilization of blood vessels. Binds to the FLT1/VEGFR1 and KDR/VEGFR2 receptors, heparan sulfate and heparin. Binding to NRP1 receptor initiates a signaling pathway needed for motor neuron axon guidance and cell body migration, including for the caudal migration of facial motor neurons from rhombomere 4 to rhombomere 6 during embryonic development. Also binds the DEAR/FBXW7-AS1 receptor. The sequence is that of Vascular endothelial growth factor A (VEGFA) from Mesocricetus auratus (Golden hamster).